Reading from the N-terminus, the 318-residue chain is Glutathione synthetase (318 aa).

The 186-residue stretch at 129-314 (KLAITEFPDL…VPEMFAVALE (186 aa)) folds into the ATP-grasp domain. 155-211 (HAAQGDVIVKPLDDMGGTGIFRLQRSEPNLNAILETLTDNGTRTIMAQRYIPEIVKG) contributes to the ATP binding site. Positions 285 and 287 each coordinate Mg(2+).

Belongs to the prokaryotic GSH synthase family. Requires Mg(2+) as cofactor. It depends on Mn(2+) as a cofactor.

It carries out the reaction gamma-L-glutamyl-L-cysteine + glycine + ATP = glutathione + ADP + phosphate + H(+). It participates in sulfur metabolism; glutathione biosynthesis; glutathione from L-cysteine and L-glutamate: step 2/2. This chain is Glutathione synthetase, found in Bordetella pertussis (strain Tohama I / ATCC BAA-589 / NCTC 13251).